Reading from the N-terminus, the 77-residue chain is Putative regulatory protein tsl2331 (77 aa).

It belongs to the RemA family.

This chain is Putative regulatory protein tsl2331, found in Thermosynechococcus vestitus (strain NIES-2133 / IAM M-273 / BP-1).